The following is a 648-amino-acid chain: Transmembrane 9 superfamily member 8 (648 aa).

The first 33 residues, 1 to 33 (MAMEFLRSSRRILESSGCAIALIFLLFIHGAHS), serve as a signal peptide directing secretion. Topologically, residues 34–285 (FYLPGVAPQD…YLLMSDNQIH (252 aa)) are lumenal. A helical membrane pass occupies residues 286–306 (WFSIVNSLMIVLFLSGMVAMI). Residues 307-355 (MLRTLYRDISRYNELETQEEAQEETGWKLVHGDVFRLPTNSDLLCVYVG) lie on the Cytoplasmic side of the membrane. Residues 356–376 (TGVQCLGMVFVTMIFAMLGFL) traverse the membrane as a helical segment. Over 377-381 (SPSNR) the chain is Lumenal. Residues 382 to 402 (GGLMTAMLLLWVFMGLFAGYA) traverse the membrane as a helical segment. The Cytoplasmic portion of the chain corresponds to 403–422 (SSRLYKMFKGTEWKRIAFRT). Residues 423–443 (AFLFPAVVSAIFFVLNALIWG) traverse the membrane as a helical segment. The Lumenal portion of the chain corresponds to 444 to 455 (QKSSGAVPFGTM). The chain crosses the membrane as a helical span at residues 456 to 476 (FALIFLWFGISVPLVFVGGYI). Over 477–506 (GFKKPAADDPVKTNKIPRQIPEQAWYMNPV) the chain is Cytoplasmic. Residues 507 to 527 (FSILIGGILPFGAVFIELFFI) form a helical membrane-spanning segment. The Lumenal segment spans residues 528–538 (LTSIWLNQFYY). A helical membrane pass occupies residues 539–559 (IFGFLFLVFVILIVTCAEITV). The Cytoplasmic segment spans residues 560–577 (VLCYFQLCSEDYLWWWRS). Residues 578-598 (YLTSGSSALYLFLYATFYFFT) form a helical membrane-spanning segment. Over 599-604 (KLQITK) the chain is Lumenal. The helical transmembrane segment at 605–625 (LVSAMLYFGYMLIASYAFFVL) threads the bilayer. Topologically, residues 626–648 (TGTIGFYACLWFTRLIYSSVKID) are cytoplasmic. The short motif at 637-642 (FTRLIY) is the Endoplasmic reticulum export signal element. Residues 646–648 (KID) carry the Golgi retention signal motif.

This sequence belongs to the nonaspanin (TM9SF) (TC 9.A.2) family.

It is found in the endosome membrane. It localises to the golgi apparatus membrane. The polypeptide is Transmembrane 9 superfamily member 8 (Arabidopsis thaliana (Mouse-ear cress)).